Consider the following 303-residue polypeptide: MWFSNLICYRFKQDVSYTQEDFDKALEQDLFRPCTGQELATFGWTKAFGKHGETLSHFSQKSILVCAKREEKVLPASVINELVAEKVDLIEAEENRPVKKKEKDELKENILHTLLPQAFKKSSLQFAFIDQENGWVVVNSGSFNKAEELLALLRKSLGTLPVVPAFANYDLDVFLTDWLTNFSTPEGFAIGSDAELEEADDSGAQVKLKGHDLSCDEVKSHLETGKRVTKLALDWQERVKFMLQNDGSIKRLSYSDTLKEENADIPKEDMAVKLDADFILASEEIKQLLEELTQGLGDIDDLA.

It belongs to the RdgC family.

It is found in the cytoplasm. It localises to the nucleoid. May be involved in recombination. The protein is Recombination-associated protein RdgC of Pseudoalteromonas translucida (strain TAC 125).